We begin with the raw amino-acid sequence, 341 residues long: GDT1-like protein 1, chloroplastic (341 aa).

Over residues 1–13 the composition is skewed to low complexity; sequence MASVASSTVFASS. 2 disordered regions span residues 1 to 41 and 54 to 76; these read MASV…GRSV and VVTRASDEEGPPEPAGQGRGGGR. Residues 1-57 constitute a chloroplast transit peptide; it reads MASVASSTVFASSLPHHRATTRAPPTPPRIPRRARLPGRSVVSCLPKRGSEKLVVTR. 7 helical membrane-spanning segments follow: residues 79–99, 117–137, 158–178, 203–223, 246–266, 286–306, and 318–338; these read PSLDASSCGLALAAAAGVLML, VVGDLGDISTGFASAFLLIFF, AIIFLGTFGALAVMTIISVVL, FLAACLLVYYGVTTLLDAASG, GAGIISAASTIASTFVLVFIA, LGVIAGSLAGHAVATLIAVLG, and IVAYIGGSLFLAFAAVTLVEI.

This sequence belongs to the GDT1 family.

It localises to the plastid. The protein resides in the chloroplast membrane. In Oryza sativa subsp. indica (Rice), this protein is GDT1-like protein 1, chloroplastic.